The following is a 611-amino-acid chain: MEPAAPSCNMIMIADQASVNAHGRHLDENRVYPSDKVPAHVANKILESGTETVRCDLTLEDMLGDYEYDDPTEEEKILMDRIADHVGNDNSDMAIKHAAGPEMNIDIVTAAASMSGITTASHSALPIRRPNTPDFRRHSEKKAKKHKNKQRQRLDDVVAKLHKPSESEADEDFIFQQPQEEEYQEEQEPQVISSSPQHFDERSPSRSSSDHGGHSGGNSRDGQFYLSSGSEDEDDEDDERVDSGYRGSSRSEDSSRYRPHGGSHSSRSSIKSSGSGSSRHHHKRKAVPERHHPFTPPSAKRYAAAAPSSRYECPVRVDSSDSDDAPTMVQRGTLKIKSFRPPSSGSNSNKHSSSSGGSTSSSHKKQQQQQAPSKKPVMSSGSDKIRDMVDRTAGGYVAPNAHKKCREDKSRKYPARALEYKNLPFRPQSPQYLLGKAIQFCKEETVHDKFIMLFYTRSQDVRKAVDETRARMGMRPNLSISCPFMTEHTKPINHSRETIDRTSAACTAGTQAVWDMEERRGQKCVPRTSDYRSMIIQAANPPDFLGAVKTCLHLSQVFPKQVCMRLCSITGGLNPLPIYEETVSSYVNAQFEADDISHHEDESGEYESDCE.

2 disordered regions span residues 119-155 and 180-383; these read TASH…QRLD and EEEY…SGSD. Residues 138–151 are compositionally biased toward basic residues; the sequence is HSEKKAKKHKNKQR. The short motif at 141–147 is the Nuclear localization signal element; that stretch reads KKAKKHK. The segment covering 198–213 has biased composition (basic and acidic residues); that stretch reads HFDERSPSRSSSDHGG. Positions 230–240 are enriched in acidic residues; that stretch reads SEDEDDEDDER. The segment covering 260 to 277 has biased composition (low complexity); that stretch reads HGGSHSSRSSIKSSGSGS. Residues 279–285 carry the Nuclear localization signal motif; it reads RHHHKRK. Over residues 341–376 the composition is skewed to low complexity; it reads PPSSGSNSNKHSSSSGGSTSSSHKKQQQQQAPSKKP.

It is found in the host nucleus. Strong transcriptional activator of the E1 promoter, shows an autoregulatory function by repression of the IE1/IE3 promoter. The IE1 protein has some additive effect on the trans-activating properties of the IE3 protein. This chain is Immediate-early protein 3 (IE1), found in Mus musculus (Mouse).